Reading from the N-terminus, the 840-residue chain is Wings apart-like protein 2 (840 aa).

Disordered stretches follow at residues 1–37 (MMER…EPVD), 56–78 (SDND…FGSN), and 532–594 (FDLE…DHHV). Basic residues predominate over residues 546–557 (KQKKSKGQKRKG). Basic and acidic residues predominate over residues 558-567 (SYRDKKDERS). Polar residues predominate over residues 569-585 (QLFSSQEESNHGLNSQE). Residues 764 to 819 (KEAEKMIVEAYSALLLAFLSTESRSIRNAIRDYLPKRDMAILVPVLDRFVAFHTTL) form the WAPL domain.

The protein belongs to the WAPL family. As to quaternary structure, interacts with the cohesin complex throughout the cell cycle. In terms of tissue distribution, expressed in roots, leaves, buds and siliques.

The protein localises to the nucleus. Its subcellular location is the chromosome. Regulator of sister chromatid cohesion in meiosis which negatively regulates cohesin association with chromatin, acting as an antagonist of CTF7. Cohesion ensures that chromosome partitioning is accurate in both meiotic and mitotic cells and plays an important role in DNA repair. Essential for the prophase removal of cohesin during meiosis thus determining the timely release of meiotic cohesion. Important for proper spindle attachment and assembly during meiosis. Helps to prevent abnormal centromere association during prophase I in meiocytes. Required for early embryonic patterning. Also involved in chromosome segregation during mitosis. This is Wings apart-like protein 2 from Arabidopsis thaliana (Mouse-ear cress).